The sequence spans 329 residues: Malate dehydrogenase (329 aa).

11-17 (GAAGQIG) serves as a coordination point for NAD(+). Residues Arg-92 and Arg-98 each coordinate substrate. NAD(+) contacts are provided by residues Asn-105, Gln-112, and 129–131 (VGN). Substrate contacts are provided by Asn-131 and Arg-165. His-190 (proton acceptor) is an active-site residue.

Belongs to the LDH/MDH superfamily. MDH type 2 family.

The enzyme catalyses (S)-malate + NAD(+) = oxaloacetate + NADH + H(+). Catalyzes the reversible oxidation of malate to oxaloacetate. The polypeptide is Malate dehydrogenase (Laribacter hongkongensis (strain HLHK9)).